A 117-amino-acid chain; its full sequence is Immunoglobulin heavy variable 3-21 (117 aa).

Residues 1 to 19 form the signal peptide; it reads MELGLRWVFLVAILEGVQC. Residues 20-44 form a framework-1 region; the sequence is EVQLVESGGGLVKPGGSLRLSCAAS. In terms of domain architecture, Ig-like spans 20 to 117; it reads EVQLVESGGG…EDTAVYYCAR (98 aa). A disulfide bond links Cys41 and Cys115. The tract at residues 45–52 is complementarity-determining-1; that stretch reads GFTFSSYS. The tract at residues 53 to 69 is framework-2; the sequence is MNWVRQAPGKGLEWVSS. A complementarity-determining-2 region spans residues 70–77; the sequence is ISSSSSYI. Residues 78–115 form a framework-3 region; sequence YYADSVKGRFTISRDNAKNSLYLQMNSLRAEDTAVYYC. Residues 116-117 form a complementarity-determining-3 region; it reads AR.

In terms of assembly, immunoglobulins are composed of two identical heavy chains and two identical light chains; disulfide-linked.

The protein resides in the secreted. The protein localises to the cell membrane. Functionally, v region of the variable domain of immunoglobulin heavy chains that participates in the antigen recognition. Immunoglobulins, also known as antibodies, are membrane-bound or secreted glycoproteins produced by B lymphocytes. In the recognition phase of humoral immunity, the membrane-bound immunoglobulins serve as receptors which, upon binding of a specific antigen, trigger the clonal expansion and differentiation of B lymphocytes into immunoglobulins-secreting plasma cells. Secreted immunoglobulins mediate the effector phase of humoral immunity, which results in the elimination of bound antigens. The antigen binding site is formed by the variable domain of one heavy chain, together with that of its associated light chain. Thus, each immunoglobulin has two antigen binding sites with remarkable affinity for a particular antigen. The variable domains are assembled by a process called V-(D)-J rearrangement and can then be subjected to somatic hypermutations which, after exposure to antigen and selection, allow affinity maturation for a particular antigen. The protein is Immunoglobulin heavy variable 3-21 of Homo sapiens (Human).